Consider the following 362-residue polypeptide: Glutaminase-asparaginase (362 aa).

Residues 1-25 form the signal peptide; it reads MKPLLHAFAPGVMALMLLLPQAAQA. The Asparaginase/glutaminase domain occupies 35-362; sequence SNVVILATGG…KELQRIFWEY (328 aa). The active-site Acyl-ester intermediate is T45. Substrate is bound by residues S92 and 125–126; that span reads TD.

The protein belongs to the asparaginase 1 family. In terms of assembly, homotetramer.

The protein localises to the periplasm. The enzyme catalyses L-glutamine + H2O = L-glutamate + NH4(+). The catalysed reaction is L-asparagine + H2O = L-aspartate + NH4(+). This chain is Glutaminase-asparaginase (ansB), found in Pseudomonas aeruginosa (strain ATCC 15692 / DSM 22644 / CIP 104116 / JCM 14847 / LMG 12228 / 1C / PRS 101 / PAO1).